We begin with the raw amino-acid sequence, 152 residues long: Transcriptional regulator MraZ (152 aa).

SpoVT-AbrB domains are found at residues 5-52 and 81-124; these read ASAI…PVQE and AHEC…DEAA.

The protein belongs to the MraZ family. Forms oligomers.

Its subcellular location is the cytoplasm. The protein resides in the nucleoid. The polypeptide is Transcriptional regulator MraZ (Shewanella piezotolerans (strain WP3 / JCM 13877)).